We begin with the raw amino-acid sequence, 217 residues long: Glycosylphosphatidylinositol anchor biosynthesis protein 11 (217 aa).

The next 2 helical transmembrane spans lie at 45 to 65 (TWLT…KVFN) and 68 to 88 (NTAE…IFQF). Asn-102 carries an N-linked (GlcNAc...) asparagine glycan. A run of 4 helical transmembrane segments spans residues 107-127 (AISI…IILF), 134-154 (LLWE…PAVY), 169-189 (YFIL…LDWD), and 197-217 (IPIV…GAYL).

Belongs to the PIGF family.

It is found in the endoplasmic reticulum membrane. It participates in glycolipid biosynthesis; glycosylphosphatidylinositol-anchor biosynthesis. Acts in the GPI biosynthetic pathway between GlcNAc-PI synthesis and GPI transfer to protein. The protein is Glycosylphosphatidylinositol anchor biosynthesis protein 11 (GPI11) of Candida glabrata (strain ATCC 2001 / BCRC 20586 / JCM 3761 / NBRC 0622 / NRRL Y-65 / CBS 138) (Yeast).